Reading from the N-terminus, the 633-residue chain is Leucine-rich repeat and IQ domain-containing protein 3 (633 aa).

LRR repeat units follow at residues 51–72, 73–94, and 98–119; these read SLRVCIFSNNFLTDIQPLQSCK, KLIKLDLHGNQIKTLPDKNFWS, and NLKLLYLHDNGFSKLKNICVLS. The LRRCT domain maps to 132-179; sequence CPVSLKKGYRHVLVNSIWPLKALDHHVISDEEIIQNWRLPERFKTFSP. The region spanning 215 to 244 is the IQ domain; the sequence is HNSPVLIIQRWIRGFIVRKHLSPYFKHKKH. The interval 324–343 is disordered; the sequence is SKQPRHHIHKGQKAMKAESE. The span at 325–336 shows a compositional bias: basic residues; the sequence is KQPRHHIHKGQK. A coiled-coil region spans residues 556 to 617; sequence IEKWEEQKYK…AKVEYIKTFY (62 aa).

This chain is Leucine-rich repeat and IQ domain-containing protein 3 (Lrriq3), found in Mus musculus (Mouse).